We begin with the raw amino-acid sequence, 426 residues long: 5-hydroxybenzimidazole synthase BzaB (426 aa).

Substrate is bound by residues Met-95, Tyr-124, His-163, 185-187 (SRG), 226-229 (DAIR), and Glu-265. His-269 is a binding site for Zn(2+). Phe-292 provides a ligand contact to substrate. Zn(2+) is bound at residue His-333. [4Fe-4S] cluster contacts are provided by Cys-407, Cys-410, and Cys-414.

The protein belongs to the ThiC family. 5-hydroxybenzimidazole synthase subfamily. It depends on [4Fe-4S] cluster as a cofactor.

The enzyme catalyses 5-amino-1-(5-phospho-beta-D-ribosyl)imidazole + AH2 + S-adenosyl-L-methionine = 5-hydroxybenzimidazole + 5'-deoxyadenosine + formate + L-methionine + A + NH4(+) + phosphate + 2 H(+). Together with BzaA, probably catalyzes the conversion of aminoimidazole ribotide (AIR) to 5-hydroxybenzimidazole (5-HBI) in a radical S-adenosyl-L-methionine (SAM)-dependent reaction. Is thus involved in the anaerobic biosynthesis of the benzimidazole lower axial ligand of the cobamide produced by M.thermoacetica. Requires BzaA for catalytic activity, as BzaB alone displays no activity. This is 5-hydroxybenzimidazole synthase BzaB from Moorella thermoacetica (strain ATCC 39073 / JCM 9320).